We begin with the raw amino-acid sequence, 116 residues long: Small ribosomal subunit protein bS6 (116 aa).

Residues 94 to 116 (ESITEPSPLTKPKEDRKGDSEAA) are disordered. A compositionally biased stretch (basic and acidic residues) spans 104–116 (KPKEDRKGDSEAA).

The protein belongs to the bacterial ribosomal protein bS6 family.

Binds together with bS18 to 16S ribosomal RNA. The sequence is that of Small ribosomal subunit protein bS6 from Idiomarina loihiensis (strain ATCC BAA-735 / DSM 15497 / L2-TR).